The sequence spans 1028 residues: U2 snRNP-associated SURP motif-containing protein (1028 aa).

2 disordered regions span residues 1 to 111 (MADK…EDEK) and 141 to 272 (VNAA…DPST). N-acetylalanine is present on A2. Residues 7-16 (GGSQKASSKT) are compositionally biased toward polar residues. Basic residues predominate over residues 45 to 54 (TRPKSPRKHN). A compositionally biased stretch (basic and acidic residues) spans 55-64 (YRNESARESL). Residue S67 is modified to Phosphoserine. Residue K80 forms a Glycyl lysine isopeptide (Lys-Gly) (interchain with G-Cter in SUMO2) linkage. Residues 92–121 (AKRTLSKKEQEELKKKEDEKAAAEIYEEFL) are a coiled coil. Composition is skewed to basic and acidic residues over residues 97 to 111 (SKKE…EDEK) and 144 to 155 (AKEEHETDEKRG). Residues K145 and K168 each participate in a glycyl lysine isopeptide (Lys-Gly) (interchain with G-Cter in SUMO2) cross-link. Residues 169-178 (NPPNQSSNER) are compositionally biased toward polar residues. The span at 186–222 (ETKKPPLKKGEKEKKKSNLELFKEELKQIQEERDERH) shows a compositional bias: basic and acidic residues. Residues 192-232 (LKKGEKEKKKSNLELFKEELKQIQEERDERHKTKGRLSRFE) are a coiled coil. S202 is modified (phosphoserine). K208 is covalently cross-linked (Glycyl lysine isopeptide (Lys-Gly) (interchain with G-Cter in SUMO2)). At S236 the chain carries Phosphoserine. The span at 239 to 249 (DGQRRSMDAPS) shows a compositional bias: basic and acidic residues. One can recognise an RRM domain in the interval 273 to 354 (TNLYLGNINP…FEMKLGWGKA (82 aa)). The SURP motif repeat unit spans residues 429–472 (LIHRMIEFVVREGPMFEAMIMNREINNPMFRFLFENQTPAHVYY). S484 is subject to Phosphoserine. The 146-residue stretch at 533–678 (LKEEQRDKLE…KLQNIFLGLV (146 aa)) folds into the CID domain. Position 718 is a phosphothreonine (T718). Residues K747 and K748 each participate in a glycyl lysine isopeptide (Lys-Gly) (interchain with G-Cter in SUMO2) cross-link. An N6-acetyllysine; alternate modification is found at K759. Residue K759 forms a Glycyl lysine isopeptide (Lys-Gly) (interchain with G-Cter in SUMO2); alternate linkage. Disordered regions lie at residues 777–840 (KWEL…EEKR) and 854–1028 (QDEL…KNKH). A coiled-coil region spans residues 779–809 (ELFDQHEESEEEENQNQEEESEDEEDTQSSK). Over residues 785–805 (EESEEEENQNQEEESEDEEDT) the composition is skewed to acidic residues. Phosphoserine is present on residues S787, S799, and S810. 2 stretches are compositionally biased toward basic and acidic residues: residues 809–840 (KSEE…EEKR) and 873–921 (QVEH…TPTR). Glycyl lysine isopeptide (Lys-Gly) (interchain with G-Cter in SUMO2) cross-links involve residues K821, K828, and K831. Residues 836-914 (SEEKRAKLRE…ESRSKDEKEK (79 aa)) adopt a coiled-coil conformation. The residue at position 930 (T930) is a Phosphothreonine. Phosphoserine is present on residues S945 and S947. The segment covering 949 to 979 (KSERSERSERSHKESSRSRSSHKDSPRDVSK) has biased composition (basic and acidic residues). Residues 990–1028 (TPKRSRRSRSRSPKKSGKKSRSQSRSPHRSHKKSKKNKH) show a composition bias toward basic residues.

This sequence belongs to the splicing factor SR family. Interacts with ERBB4.

The protein resides in the nucleus. The sequence is that of U2 snRNP-associated SURP motif-containing protein (U2SURP) from Pongo abelii (Sumatran orangutan).